The following is a 111-amino-acid chain: MEARAIARYVRISPRKVRLVLNLIRGKHVDEALTILRFTPKRASGIVAKVLKSAIANAENNHGMNRDNLYVAKAVADEGPTMKRVFPRAMGRADIMRKRTSHITIVVKEKE.

Belongs to the universal ribosomal protein uL22 family. In terms of assembly, part of the 50S ribosomal subunit.

Its function is as follows. This protein binds specifically to 23S rRNA; its binding is stimulated by other ribosomal proteins, e.g. L4, L17, and L20. It is important during the early stages of 50S assembly. It makes multiple contacts with different domains of the 23S rRNA in the assembled 50S subunit and ribosome. Functionally, the globular domain of the protein is located near the polypeptide exit tunnel on the outside of the subunit, while an extended beta-hairpin is found that lines the wall of the exit tunnel in the center of the 70S ribosome. This Thermoanaerobacter pseudethanolicus (strain ATCC 33223 / 39E) (Clostridium thermohydrosulfuricum) protein is Large ribosomal subunit protein uL22.